The primary structure comprises 365 residues: MSETRLFVGRIPPQATREDMMDFFKGYGQILDCKLMNGFGFVEVEDARDARDIVNDFQGKEFMGSRIVVEPARGERRRRENFRESAASKYPRPRRTGFRLIVENLSEDVSWQDLKDVMRKAGEPTFTDAHRENPGAGVVEFSTEEDMRNALTSLNGEVIKGQAVTLREDPDAANEPLPEVPSRFRSRSPPARRRYRDDYRRGGDYRRDAYRPGRDDERRYAPRGEYRRNNRDEYRRGGRDEYRRNSRSDYRRPHDDEYRRPRGDEYRPGRDEYRRSRDDGRPSHDDEYRRDAYSRSPSPRRDREENRSPAYEGSKSYSAAPEASMESSAPTESYDKPAASEEQQPLQNHSDVGNGSAEGQVAAEW.

RRM domains lie at 6–69 (LFVG…RIVV) and 100–166 (LIVE…AVTL). The interval 166-365 (LREDPDAANE…SAEGQVAAEW (200 aa)) is disordered. The segment covering 184–194 (FRSRSPPARRR) has biased composition (basic residues). A phosphoserine mark is found at serine 186, serine 188, serine 276, serine 294, serine 296, serine 298, and serine 308. The segment covering 195 to 307 (YRDDYRRGGD…SPRRDREENR (113 aa)) has biased composition (basic and acidic residues). Low complexity predominate over residues 316-332 (SYSAAPEASMESSAPTE). Polar residues predominate over residues 341–353 (EEQQPLQNHSDVG).

Belongs to the splicing factor SR family. Post-translationally, extensively phosphorylated on serine residues in the RS domain.

It is found in the nucleus. Its function is as follows. Has a role in pre-mRNA splicing where it is involved in spliceosome assembly. The protein is Pre-mRNA-splicing factor srp2 (srp2) of Schizosaccharomyces pombe (strain 972 / ATCC 24843) (Fission yeast).